The primary structure comprises 210 residues: GEM-like protein 7 (210 aa).

The 79-residue stretch at 88–166 folds into the GRAM domain; sequence KIYKRLFKVC…CKINGVNQSQ (79 aa).

It belongs to the GEM family.

In Arabidopsis thaliana (Mouse-ear cress), this protein is GEM-like protein 7.